The primary structure comprises 164 residues: Putative 4-hydroxy-4-methyl-2-oxoglutarate aldolase (164 aa).

Substrate-binding positions include 80 to 83 (GGNL) and Arg102. Residue Asp103 participates in a divalent metal cation binding.

Belongs to the class II aldolase/RraA-like family. As to quaternary structure, homotrimer. A divalent metal cation serves as cofactor.

The enzyme catalyses 4-hydroxy-4-methyl-2-oxoglutarate = 2 pyruvate. The catalysed reaction is oxaloacetate + H(+) = pyruvate + CO2. In terms of biological role, catalyzes the aldol cleavage of 4-hydroxy-4-methyl-2-oxoglutarate (HMG) into 2 molecules of pyruvate. Also contains a secondary oxaloacetate (OAA) decarboxylase activity due to the common pyruvate enolate transition state formed following C-C bond cleavage in the retro-aldol and decarboxylation reactions. In Paraburkholderia phytofirmans (strain DSM 17436 / LMG 22146 / PsJN) (Burkholderia phytofirmans), this protein is Putative 4-hydroxy-4-methyl-2-oxoglutarate aldolase.